A 140-amino-acid polypeptide reads, in one-letter code: Peptidyl-prolyl cis-trans isomerase FKBP2 (140 aa).

An N-terminal signal peptide occupies residues 1–22 (MRLSWILTILSICLSALAAATG). The region spanning 47 to 135 (GDVLHMHYTG…VFEVELLKIE (89 aa)) is the PPIase FKBP-type domain. Positions 137-140 (RSEL) match the Prevents secretion from ER motif.

It belongs to the FKBP-type PPIase family. FKBP2 subfamily. Interacts with ARFGEF1/BIG1 and the C-terminal of EPB41L2.

It is found in the endoplasmic reticulum membrane. The catalysed reaction is [protein]-peptidylproline (omega=180) = [protein]-peptidylproline (omega=0). Its activity is regulated as follows. Inhibited by both FK506 and rapamycin. PPIases accelerate the folding of proteins. It catalyzes the cis-trans isomerization of proline imidic peptide bonds in oligopeptides. The chain is Peptidyl-prolyl cis-trans isomerase FKBP2 (Fkbp2) from Mus musculus (Mouse).